Reading from the N-terminus, the 579-residue chain is Probable pectinesterase/pectinesterase inhibitor 7 (579 aa).

A signal peptide spans 1–20; that stretch reads MESPIFILITLSFFLQSVLA. Residues 22-185 form a pectinesterase inhibitor 7 region; that stretch reads SQTLSNSSTI…TKLLGVSLAL (164 aa). Residues Asn-27, Asn-115, Asn-174, Asn-274, Asn-277, Asn-287, Asn-326, and Asn-333 are each glycosylated (N-linked (GlcNAc...) asparagine). The segment at 265 to 564 is pectinesterase 7; that stretch reads VTVSQDGTGN…TVTGLFIEAD (300 aa). Residue Thr-342 participates in substrate binding. The N-linked (GlcNAc...) asparagine glycan is linked to Asn-359. Gln-372 contacts substrate. Catalysis depends on Asp-395, which acts as the Proton donor; for pectinesterase activity. A disulfide bridge connects residues Cys-409 and Cys-429. Asp-416 serves as the catalytic Nucleophile; for pectinesterase activity. N-linked (GlcNAc...) asparagine glycans are attached at residues Asn-462 and Asn-475. Substrate-binding residues include Arg-484 and Trp-486. 4 N-linked (GlcNAc...) asparagine glycosylation sites follow: Asn-526, Asn-533, Asn-547, and Asn-553.

This sequence in the N-terminal section; belongs to the PMEI family. The protein in the C-terminal section; belongs to the pectinesterase family. As to expression, expressed in siliques.

The protein localises to the secreted. Its subcellular location is the cell wall. The enzyme catalyses [(1-&gt;4)-alpha-D-galacturonosyl methyl ester](n) + n H2O = [(1-&gt;4)-alpha-D-galacturonosyl](n) + n methanol + n H(+). Its pathway is glycan metabolism; pectin degradation; 2-dehydro-3-deoxy-D-gluconate from pectin: step 1/5. Acts in the modification of cell walls via demethylesterification of cell wall pectin. The protein is Probable pectinesterase/pectinesterase inhibitor 7 (PME7) of Arabidopsis thaliana (Mouse-ear cress).